A 154-amino-acid polypeptide reads, in one-letter code: Large ribosomal subunit protein uL11 (154 aa).

The protein belongs to the universal ribosomal protein uL11 family. Part of the ribosomal stalk of the 50S ribosomal subunit. Interacts with L10 and the large rRNA to form the base of the stalk. L10 forms an elongated spine to which L12 dimers bind in a sequential fashion forming a multimeric L10(L12)X complex. One or more lysine residues are methylated.

Its function is as follows. Forms part of the ribosomal stalk which helps the ribosome interact with GTP-bound translation factors. This Leuconostoc mesenteroides subsp. mesenteroides (strain ATCC 8293 / DSM 20343 / BCRC 11652 / CCM 1803 / JCM 6124 / NCDO 523 / NBRC 100496 / NCIMB 8023 / NCTC 12954 / NRRL B-1118 / 37Y) protein is Large ribosomal subunit protein uL11.